The chain runs to 100 residues: Urease subunit gamma (100 aa).

This sequence belongs to the urease gamma subunit family. In terms of assembly, heterotrimer of UreA (gamma), UreB (beta) and UreC (alpha) subunits. Three heterotrimers associate to form the active enzyme.

The protein localises to the cytoplasm. The enzyme catalyses urea + 2 H2O + H(+) = hydrogencarbonate + 2 NH4(+). It functions in the pathway nitrogen metabolism; urea degradation; CO(2) and NH(3) from urea (urease route): step 1/1. The polypeptide is Urease subunit gamma (Delftia acidovorans (strain DSM 14801 / SPH-1)).